A 206-amino-acid polypeptide reads, in one-letter code: Pyridoxine/pyridoxamine 5'-phosphate oxidase (206 aa).

Residues 53–58, 68–69, lysine 75, and glutamine 97 contribute to the FMN site; these read RMVLLK and YT. Lysine 58 is a binding site for substrate. Substrate is bound by residues tyrosine 115, arginine 119, and serine 123. Residues 132–133 and tryptophan 177 each bind FMN; that span reads QS. 183-185 provides a ligand contact to substrate; sequence RLH. FMN is bound at residue arginine 187.

This sequence belongs to the pyridoxamine 5'-phosphate oxidase family. As to quaternary structure, homodimer. FMN serves as cofactor.

It carries out the reaction pyridoxamine 5'-phosphate + O2 + H2O = pyridoxal 5'-phosphate + H2O2 + NH4(+). The catalysed reaction is pyridoxine 5'-phosphate + O2 = pyridoxal 5'-phosphate + H2O2. Its pathway is cofactor metabolism; pyridoxal 5'-phosphate salvage; pyridoxal 5'-phosphate from pyridoxamine 5'-phosphate: step 1/1. The protein operates within cofactor metabolism; pyridoxal 5'-phosphate salvage; pyridoxal 5'-phosphate from pyridoxine 5'-phosphate: step 1/1. In terms of biological role, catalyzes the oxidation of either pyridoxine 5'-phosphate (PNP) or pyridoxamine 5'-phosphate (PMP) into pyridoxal 5'-phosphate (PLP). This is Pyridoxine/pyridoxamine 5'-phosphate oxidase from Sinorhizobium fredii (strain NBRC 101917 / NGR234).